Reading from the N-terminus, the 399-residue chain is Centrosomal protein 43 (399 aa).

Positions aspartate 70–glutamine 102 constitute a LisH domain. Disordered stretches follow at residues glutamate 139–histidine 218 and asparagine 232–lysine 308. Threonine 143 bears the Phosphothreonine mark. Phosphoserine occurs at positions 152, 156, and 160. A compositionally biased stretch (polar residues) spans glycine 163–serine 172. At threonine 170 the chain carries Phosphothreonine. The segment covering proline 175 to serine 186 has biased composition (basic residues). Serine 202 is modified (phosphoserine). The segment covering serine 205–histidine 218 has biased composition (low complexity). At threonine 234 the chain carries Phosphothreonine. Over residues proline 245–phenylalanine 256 the composition is skewed to acidic residues. Residues proline 259–lysine 275 show a composition bias toward basic and acidic residues. Residues alanine 286–leucine 302 are compositionally biased toward low complexity. Serine 301 and serine 326 each carry phosphoserine. The disordered stretch occupies residues threonine 331–isoleucine 353. At tyrosine 337 the chain carries Phosphotyrosine.

The protein belongs to the CEP43 family. As to quaternary structure, homodimer. Part of a ternary complex that contains CEP350, CEP43 and MAPRE1. Interacts directly with CEP350 and MAPRE1. Interacts with CEP19. Interacts (via N-terminus) with CEP350 (via C-terminus). Ubiquitous. Highly expressed in heart, liver, muscle, kidney, intestine, colon, adrenal gland, prostate, testis, and pancreas.

Its subcellular location is the cytoplasm. The protein localises to the cytoskeleton. It is found in the microtubule organizing center. The protein resides in the centrosome. It localises to the centriole. Its subcellular location is the cilium basal body. Required for anchoring microtubules to the centrosomes. Required for ciliation. This Homo sapiens (Human) protein is Centrosomal protein 43.